The following is a 211-amino-acid chain: MWSVTGALTVAVPPTAAACRTKPFLISSSFPKQTKKLHLSSPSLSLPSSHFSSSFKTAATSIEQQSSVNKGESTKYHFLVANAKFMLDEEEHFQEQLFERLRYFGERELVQDFWLVIEPKFLDNFPKITQRLRRPAVALVSTNGTWITFMKLRLDRVLYDSFEATSLDEALASNPTTLEFDKPKNWVAPYPKYEPGWWDTFLPKVTQESAV.

A chloroplast-targeting transit peptide spans 1 to 80 (MWSVTGALTV…GESTKYHFLV (80 aa)).

This sequence belongs to the ycf54 family. Interacts with LFNR1 and CRD1/CHL27 in chloroplasts.

The protein localises to the plastid. Its subcellular location is the chloroplast. Involved in the biosynthesis of chlorophyll; acts probably as a scaffolding factor in the MgProto monomethylester (MgProtoME) cyclase complex to stabilize CRD1/CHL27, the catalytic subunit which catalyzes the formation of a fifth isocyclic ring to tetrapyrroles to form protochlorophyllide. The polypeptide is Protein YCF54, chloroplastic (Arabidopsis thaliana (Mouse-ear cress)).